We begin with the raw amino-acid sequence, 445 residues long: Xylose isomerase (445 aa).

Active-site residues include histidine 107 and aspartate 110. Residues glutamate 238, glutamate 274, histidine 277, aspartate 302, aspartate 313, aspartate 315, and aspartate 345 each coordinate Mg(2+).

This sequence belongs to the xylose isomerase family. Homotetramer. It depends on Mg(2+) as a cofactor.

Its subcellular location is the cytoplasm. The catalysed reaction is alpha-D-xylose = alpha-D-xylulofuranose. This chain is Xylose isomerase (xylA), found in Bacillus spizizenii (strain ATCC 23059 / NRRL B-14472 / W23) (Bacillus subtilis subsp. spizizenii).